Consider the following 489-residue polypeptide: UDP-N-acetylmuramoyl-L-alanyl-D-glutamate--2,6-diaminopimelate ligase (489 aa).

S34 is a binding site for UDP-N-acetyl-alpha-D-muramoyl-L-alanyl-D-glutamate. 110-116 (GTAGKTS) lines the ATP pocket. Residues 152-153 (TT), S179, Q185, and R187 each bind UDP-N-acetyl-alpha-D-muramoyl-L-alanyl-D-glutamate. K219 carries the post-translational modification N6-carboxylysine. Meso-2,6-diaminopimelate contacts are provided by residues R383, 407–410 (DNPR), G455, and E459. Residues 407 to 410 (DNPR) carry the Meso-diaminopimelate recognition motif motif.

The protein belongs to the MurCDEF family. MurE subfamily. The cofactor is Mg(2+). Post-translationally, carboxylation is probably crucial for Mg(2+) binding and, consequently, for the gamma-phosphate positioning of ATP.

It localises to the cytoplasm. It carries out the reaction UDP-N-acetyl-alpha-D-muramoyl-L-alanyl-D-glutamate + meso-2,6-diaminopimelate + ATP = UDP-N-acetyl-alpha-D-muramoyl-L-alanyl-gamma-D-glutamyl-meso-2,6-diaminopimelate + ADP + phosphate + H(+). Its pathway is cell wall biogenesis; peptidoglycan biosynthesis. Its function is as follows. Catalyzes the addition of meso-diaminopimelic acid to the nucleotide precursor UDP-N-acetylmuramoyl-L-alanyl-D-glutamate (UMAG) in the biosynthesis of bacterial cell-wall peptidoglycan. The polypeptide is UDP-N-acetylmuramoyl-L-alanyl-D-glutamate--2,6-diaminopimelate ligase (Agrobacterium fabrum (strain C58 / ATCC 33970) (Agrobacterium tumefaciens (strain C58))).